Here is a 660-residue protein sequence, read N- to C-terminus: Long chain acyl-CoA synthetase 1 (660 aa).

225 to 236 contacts ATP; it reads IMYTSGTSGDPK. The segment at 492 to 516 is fatty acid-binding; that stretch reads DGWFHTGDIGEILPNGVLKIIDRKK.

The protein belongs to the ATP-dependent AMP-binding enzyme family. Requires Mg(2+) as cofactor. Epidermal-specific expression along the entire stem. In cauline leaves, was expressed over the entire leaf surface, most strongly in trichomes and guard cells, but not in mesophyll cells. In flowers, the expression was detected in the stigma and filaments of the stamens, and in the carpel was expressed specifically in ovaries. In roots, was expressed in primary and lateral roots, but not in the root tips.

It is found in the endoplasmic reticulum. It carries out the reaction a long-chain fatty acid + ATP + CoA = a long-chain fatty acyl-CoA + AMP + diphosphate. The protein operates within lipid metabolism; fatty acid metabolism. Its function is as follows. Activation of long-chain fatty acids for both synthesis of cellular lipids, and degradation via beta-oxidation. Acts in both the wax and cutin pathways. Preferentially uses palmitate, palmitoleate, linoleate and eicosenoate. Seems to have a specific activity against very long-chain fatty acid (VLCFA) class with acids longer than 24 carbons (C(24)). The polypeptide is Long chain acyl-CoA synthetase 1 (LACS1) (Arabidopsis thaliana (Mouse-ear cress)).